The chain runs to 297 residues: Formamidopyrimidine-DNA glycosylase (297 aa).

P2 (schiff-base intermediate with DNA) is an active-site residue. E3 functions as the Proton donor in the catalytic mechanism. K58 functions as the Proton donor; for beta-elimination activity in the catalytic mechanism. Residues H106, R125, and R168 each contribute to the DNA site. An FPG-type zinc finger spans residues 259–295 (RVYDREGLACTARGCRGVVRRVVQSGRSTFFCEVCQP). The active-site Proton donor; for delta-elimination activity is R285.

This sequence belongs to the FPG family. Monomer. Zn(2+) is required as a cofactor.

It carries out the reaction Hydrolysis of DNA containing ring-opened 7-methylguanine residues, releasing 2,6-diamino-4-hydroxy-5-(N-methyl)formamidopyrimidine.. The catalysed reaction is 2'-deoxyribonucleotide-(2'-deoxyribose 5'-phosphate)-2'-deoxyribonucleotide-DNA = a 3'-end 2'-deoxyribonucleotide-(2,3-dehydro-2,3-deoxyribose 5'-phosphate)-DNA + a 5'-end 5'-phospho-2'-deoxyribonucleoside-DNA + H(+). Involved in base excision repair of DNA damaged by oxidation or by mutagenic agents. Acts as a DNA glycosylase that recognizes and removes damaged bases. Has a preference for oxidized purines, such as 7,8-dihydro-8-oxoguanine (8-oxoG). Has AP (apurinic/apyrimidinic) lyase activity and introduces nicks in the DNA strand. Cleaves the DNA backbone by beta-delta elimination to generate a single-strand break at the site of the removed base with both 3'- and 5'-phosphates. This chain is Formamidopyrimidine-DNA glycosylase, found in Methylobacterium nodulans (strain LMG 21967 / CNCM I-2342 / ORS 2060).